The following is a 248-amino-acid chain: 1,2-phenylacetyl-CoA epoxidase, subunit C (248 aa).

Residues 76–79 and 177–179 contribute to the substrate site; these read QFSN and IAL.

In terms of assembly, forms a stable heterotetramer (dimer of heterodimers) with PaaA and a stable heterodimer with PaaB.

It participates in aromatic compound metabolism; phenylacetate degradation. Its function is as follows. Component of 1,2-phenylacetyl-CoA epoxidase multicomponent enzyme system which catalyzes the reduction of phenylacetyl-CoA (PA-CoA) to form 1,2-epoxyphenylacetyl-CoA. The subunit C may be essential for structural integrity of the alpha subunit. In Escherichia coli (strain K12), this protein is 1,2-phenylacetyl-CoA epoxidase, subunit C (paaC).